The chain runs to 208 residues: Neuroendocrine protein 7B2 (208 aa).

Positions 1–26 (MGMYSAIPLALPMVLLMVYGLTPSLG) are cleaved as a signal peptide. C120 and C129 are joined by a disulfide. Position 204 is a phosphoserine (S204).

It belongs to the 7B2 family. As to quaternary structure, interacts with pcsk2 early in the secretory pathway. Dissociation occurs at later stages. In terms of processing, proteolytically cleaved in the Golgi by a furin-like convertase to generate bioactive peptides. Post-translationally, sulfated on tyrosine residues.

The protein resides in the secreted. Functionally, acts as a molecular chaperone for pcsk2, preventing its premature activation in the regulated secretory pathway. Binds to inactive pcsk2 in the endoplasmic reticulum and facilitates its transport from there to later compartments of the secretory pathway where it is proteolytically matured and activated. Also required for cleavage of pcsk2 but does not appear to be involved in its folding. This Xenopus laevis (African clawed frog) protein is Neuroendocrine protein 7B2 (scg5.L).